The sequence spans 275 residues: Elongation factor Ts (275 aa).

Residues 80–83 are involved in Mg(2+) ion dislocation from EF-Tu; sequence TDFV.

The protein belongs to the EF-Ts family.

Its subcellular location is the cytoplasm. Its function is as follows. Associates with the EF-Tu.GDP complex and induces the exchange of GDP to GTP. It remains bound to the aminoacyl-tRNA.EF-Tu.GTP complex up to the GTP hydrolysis stage on the ribosome. The polypeptide is Elongation factor Ts (Clavibacter sepedonicus (Clavibacter michiganensis subsp. sepedonicus)).